The primary structure comprises 326 residues: Adenosine receptor A1 (326 aa).

Residues 1-10 lie on the Extracellular side of the membrane; that stretch reads MPPAISAFQA. Residues 11 to 33 form a helical membrane-spanning segment; sequence AYIGIEVLIALVSVPGNVLVIWA. Over 34 to 46 the chain is Cytoplasmic; the sequence is VKVNQALRDATFC. A helical transmembrane segment spans residues 47–69; that stretch reads FIVSLAVADVAVGALVIPLAILI. The Extracellular portion of the chain corresponds to 70–80; it reads NIGPRTYFHTC. C80 and C169 are disulfide-bonded. A helical membrane pass occupies residues 81–102; the sequence is LMVACPVLILTQSSILALLAIA. Over 103 to 123 the chain is Cytoplasmic; sequence VDRYLRVKIPLRYKTVVTPRR. Residues 124 to 146 traverse the membrane as a helical segment; that stretch reads AAVAIAGCWILSFVVGLTPLFGW. The Extracellular portion of the chain corresponds to 147 to 176; it reads NRLGEAQRAWAANGSGGEPVIKCEFEKVIS. N159 is a glycosylation site (N-linked (GlcNAc...) asparagine). Residues 177–201 form a helical membrane-spanning segment; the sequence is MEYMVYFNFFVWVLPPLLLMVLIYL. The Cytoplasmic segment spans residues 202-235; sequence EVFYLIRRQLGKKVSASSGDPQKYYGKELKIAKS. The chain crosses the membrane as a helical span at residues 236-259; the sequence is LALILFLFALSWLPLHILNCITLF. At 260–267 the chain is on the extracellular side; the sequence is CPSCRKPS. Residues 268 to 292 form a helical membrane-spanning segment; sequence ILMYIAIFLTHGNSAMNPIVYAFRI. At 293 to 326 the chain is on the cytoplasmic side; that stretch reads QKFRVTFLKIWNDHFRCQPTPPVDEDPPEEAPHD. Residue C309 is the site of S-palmitoyl cysteine attachment.

This sequence belongs to the G-protein coupled receptor 1 family.

The protein localises to the cell membrane. In terms of biological role, receptor for adenosine. The activity of this receptor is mediated by G proteins which inhibit adenylyl cyclase. The protein is Adenosine receptor A1 (ADORA1) of Canis lupus familiaris (Dog).